The primary structure comprises 4008 residues: Extracellular matrix organizing protein FRAS1 (4008 aa).

A signal peptide spans 1–26 (MGVLKVWLGLALALAEFAVLPHHSEG). VWFC domains are found at residues 27–88 (ACVY…PECV), 93–153 (GSCH…PVCV), 157–217 (KPCS…PQCS), 219–279 (RSCS…EECV), and 283–343 (GSCS…PECI). The Extracellular segment spans residues 27–3901 (ACVYQDSLLA…AASLSQTGAS (3875 aa)). Residue Ser344 is modified to Phosphoserine. The region spanning 347–417 (GYCVYEETGE…VKGQCCPDCT (71 aa)) is the VWFC 6 domain. N-linked (GlcNAc...) asparagine glycosylation is present at Asn361. FU repeat units lie at residues 409–460 (KGQC…GFYQ), 462–505 (GSLC…GFYQ), 507–553 (RHSC…GFYN), 555–599 (QGTC…GYYA), 602–647 (TGRC…GFYS), 649–705 (HGVC…HFYL), 708–753 (TGIC…GYFH), 755–800 (EGSC…EQFL), 803–852 (VGYC…GYYA), 854–900 (RGAC…GHYL), 903–948 (NHVC…QYYL), 952–997 (TNTC…SFYQ), 999–1042 (SGLC…GYFA), and 1046–1089 (KHKC…GFSV). Asn728 carries an N-linked (GlcNAc...) asparagine glycan. 2 N-linked (GlcNAc...) asparagine glycosylation sites follow: Asn1093 and Asn1108. CSPG repeat units follow at residues 1102–1197 (TPSL…LKIS), 1217–1308 (APYV…LQAN), 1329–1438 (GLQL…FEVS), 1463–1559 (APKV…FSFA), 1595–1689 (PVFQ…ISVT), 1710–1810 (GPRL…FSVS), and 1833–1936 (PPVI…FYVS). Asn1504 is a glycosylation site (N-linked (GlcNAc...) asparagine). Asn1777 carries an N-linked (GlcNAc...) asparagine glycan. Asn1948 and Asn1978 each carry an N-linked (GlcNAc...) asparagine glycan. CSPG repeat units follow at residues 1957–2057 (EPPR…FSLT), 2078–2177 (TPHL…FDVV), 2199–2291 (PPVI…FTLS), 2311–2404 (SLPV…FTVS), and 2439–2536 (TPRI…FLVK). Calx-beta domains are found at residues 2543–2646 (VSDN…VELS), 2659–2770 (AKVI…IALA), 2784–2890 (AKVL…VFLS), 2905–3007 (IAIN…VYLG), and 3025–3129 (ATIT…LVLG). 3 N-linked (GlcNAc...) asparagine glycosylation sites follow: Asn2563, Asn2664, and Asn2682. N-linked (GlcNAc...) asparagine glycosylation is found at Asn2908, Asn2985, Asn3070, Asn3218, Asn3676, and Asn3875. A helical membrane pass occupies residues 3902–3922 (IGSALAAIMLLLLVFLVACFI). Residues 3923–4008 (NRKCQKQRKK…HNNLQDGTEV (86 aa)) are Cytoplasmic-facing.

It belongs to the FRAS1 family. In terms of tissue distribution, expressed in many adult tissues, with highest levels in kidney, pancreas and thalamus. Relatively high expression was also detected in fetal kidney and heart.

Its subcellular location is the cell membrane. In terms of biological role, involved in extracellular matrix organization. Required for the regulation of epidermal-basement membrane adhesion responsible for proper organogenesis during embryonic development. Involved in brain organization and function. This chain is Extracellular matrix organizing protein FRAS1, found in Homo sapiens (Human).